We begin with the raw amino-acid sequence, 155 residues long: 3-hydroxyacyl-[acyl-carrier-protein] dehydratase FabZ (155 aa).

The active site involves His58.

It belongs to the thioester dehydratase family. FabZ subfamily.

It localises to the cytoplasm. It catalyses the reaction a (3R)-hydroxyacyl-[ACP] = a (2E)-enoyl-[ACP] + H2O. Involved in unsaturated fatty acids biosynthesis. Catalyzes the dehydration of short chain beta-hydroxyacyl-ACPs and long chain saturated and unsaturated beta-hydroxyacyl-ACPs. The protein is 3-hydroxyacyl-[acyl-carrier-protein] dehydratase FabZ of Rhizobium etli (strain CIAT 652).